Reading from the N-terminus, the 213-residue chain is Urease accessory protein UreG (213 aa).

14-21 (GPVGSGKT) lines the GTP pocket.

The protein belongs to the SIMIBI class G3E GTPase family. UreG subfamily. As to quaternary structure, homodimer. UreD, UreF and UreG form a complex that acts as a GTP-hydrolysis-dependent molecular chaperone, activating the urease apoprotein by helping to assemble the nickel containing metallocenter of UreC. The UreE protein probably delivers the nickel.

Its subcellular location is the cytoplasm. Functionally, facilitates the functional incorporation of the urease nickel metallocenter. This process requires GTP hydrolysis, probably effectuated by UreG. This chain is Urease accessory protein UreG, found in Mesorhizobium japonicum (strain LMG 29417 / CECT 9101 / MAFF 303099) (Mesorhizobium loti (strain MAFF 303099)).